The primary structure comprises 134 residues: ATP synthase epsilon chain (134 aa).

The protein belongs to the ATPase epsilon chain family. In terms of assembly, F-type ATPases have 2 components, CF(1) - the catalytic core - and CF(0) - the membrane proton channel. CF(1) has five subunits: alpha(3), beta(3), gamma(1), delta(1), epsilon(1). CF(0) has three main subunits: a, b and c.

It localises to the cell membrane. Its function is as follows. Produces ATP from ADP in the presence of a proton gradient across the membrane. This chain is ATP synthase epsilon chain (atpC), found in Priestia megaterium (strain ATCC 12872 / QMB1551) (Bacillus megaterium).